Here is a 413-residue protein sequence, read N- to C-terminus: Probable N-acetyltransferase HLS1-like (413 aa).

The N-acetyltransferase domain maps to 5-187; that stretch reads VEVREYDPSK…VNPVYAHRVN (183 aa).

The protein belongs to the acetyltransferase family.

In Arabidopsis thaliana (Mouse-ear cress), this protein is Probable N-acetyltransferase HLS1-like.